The sequence spans 167 residues: Urease accessory protein UreE (167 aa).

It belongs to the UreE family.

The protein localises to the cytoplasm. In terms of biological role, involved in urease metallocenter assembly. Binds nickel. Probably functions as a nickel donor during metallocenter assembly. The chain is Urease accessory protein UreE from Pseudomonas paraeruginosa (strain DSM 24068 / PA7) (Pseudomonas aeruginosa (strain PA7)).